The chain runs to 484 residues: Ribonuclease Y (484 aa).

The chain crosses the membrane as a helical span at residues 18–38 (FFAFLFLIIIAFNLCLFAYLY). In terms of domain architecture, KH spans 166–234 (SPSFLISESD…LTVRNILMND (69 aa)). The 93-residue stretch at 293–385 (VLSHSLETAF…TQIADKLSAA (93 aa)) folds into the HD domain.

Belongs to the RNase Y family.

The protein resides in the cell membrane. In terms of biological role, endoribonuclease that initiates mRNA decay. This chain is Ribonuclease Y, found in Mycoplasma genitalium (strain ATCC 33530 / DSM 19775 / NCTC 10195 / G37) (Mycoplasmoides genitalium).